The primary structure comprises 134 residues: Cytochrome b (134 aa).

Helical transmembrane passes span 33–53, 77–98, and 113–133; these read FGSLLGLCLAVQILTGLFLAM, WLIRYMHANGASMFFICLFLHV, and WNMGIILLFAVMATAFMGYVL. Heme b contacts are provided by H83 and H97.

Belongs to the cytochrome b family. The cytochrome bc1 complex contains 11 subunits: 3 respiratory subunits (MT-CYB, CYC1 and UQCRFS1), 2 core proteins (UQCRC1 and UQCRC2) and 6 low-molecular weight proteins (UQCRH/QCR6, UQCRB/QCR7, UQCRQ/QCR8, UQCR10/QCR9, UQCR11/QCR10 and a cleavage product of UQCRFS1). This cytochrome bc1 complex then forms a dimer. Heme b is required as a cofactor.

The protein localises to the mitochondrion inner membrane. In terms of biological role, component of the ubiquinol-cytochrome c reductase complex (complex III or cytochrome b-c1 complex) that is part of the mitochondrial respiratory chain. The b-c1 complex mediates electron transfer from ubiquinol to cytochrome c. Contributes to the generation of a proton gradient across the mitochondrial membrane that is then used for ATP synthesis. In Microtus subterraneus (European pine vole), this protein is Cytochrome b (MT-CYB).